The chain runs to 207 residues: MKRDPTKGRKTPDHYARKAKTEHYPARSVYKLQEIQKKHNVLKPGNAVLDLGCFPGSWMMFAAETVGRGGKVTGIDLKKVATHMPAQATSLQEDIYEIDREALAGTLGPLDVVLSDMAPDTMGNKFTDAARSFHLAAAALDLALFLLKPGGHFVCKVFQGEDFQNFVNMVKAEFERHKVFKPETCRKDSKETYVIGFSKKESTHVGS.

The segment at 1–20 (MKRDPTKGRKTPDHYARKAK) is disordered. Residues Gly56, Trp58, Asp76, Asp94, and Asp116 each coordinate S-adenosyl-L-methionine. Lys156 (proton acceptor) is an active-site residue.

This sequence belongs to the class I-like SAM-binding methyltransferase superfamily. RNA methyltransferase RlmE family.

Its subcellular location is the cytoplasm. It carries out the reaction uridine(2552) in 23S rRNA + S-adenosyl-L-methionine = 2'-O-methyluridine(2552) in 23S rRNA + S-adenosyl-L-homocysteine + H(+). Specifically methylates the uridine in position 2552 of 23S rRNA at the 2'-O position of the ribose in the fully assembled 50S ribosomal subunit. The chain is Ribosomal RNA large subunit methyltransferase E from Desulfosudis oleivorans (strain DSM 6200 / JCM 39069 / Hxd3) (Desulfococcus oleovorans).